Reading from the N-terminus, the 337-residue chain is 1-aminocyclopropane-1-carboxylate deaminase (337 aa).

At Lys-50 the chain carries N6-(pyridoxal phosphate)lysine. The Nucleophile role is filled by Ser-77.

It belongs to the ACC deaminase/D-cysteine desulfhydrase family. As to quaternary structure, homotrimer. Requires pyridoxal 5'-phosphate as cofactor.

It carries out the reaction 1-aminocyclopropane-1-carboxylate + H2O = 2-oxobutanoate + NH4(+). Catalyzes a cyclopropane ring-opening reaction, the irreversible conversion of 1-aminocyclopropane-1-carboxylate (ACC) to ammonia and alpha-ketobutyrate. Allows growth on ACC as a nitrogen source. This is 1-aminocyclopropane-1-carboxylate deaminase from Methylobacterium nodulans (strain LMG 21967 / CNCM I-2342 / ORS 2060).